A 307-amino-acid chain; its full sequence is Thioredoxin reductase (307 aa).

36–43 contributes to the FAD binding site; it reads DNAAPGGK. Cys-138 and Cys-141 are joined by a disulfide. 278–287 is a binding site for FAD; sequence DIRIKDIRQI.

This sequence belongs to the class-II pyridine nucleotide-disulfide oxidoreductase family. In terms of assembly, homodimer. The cofactor is FAD.

It localises to the cytoplasm. It carries out the reaction [thioredoxin]-dithiol + NADP(+) = [thioredoxin]-disulfide + NADPH + H(+). The chain is Thioredoxin reductase (trxB) from Mycoplasmopsis pulmonis (strain UAB CTIP) (Mycoplasma pulmonis).